The chain runs to 215 residues: Serine acetyltransferase (215 aa).

The protein belongs to the transferase hexapeptide repeat family.

It is found in the cytoplasm. The enzyme catalyses L-serine + acetyl-CoA = O-acetyl-L-serine + CoA. Its pathway is amino-acid biosynthesis; L-cysteine biosynthesis; L-cysteine from L-serine: step 1/2. This chain is Serine acetyltransferase (cysE), found in Staphylococcus aureus (strain MRSA252).